A 143-amino-acid chain; its full sequence is Ribonuclease P protein component 2 (143 aa).

This sequence belongs to the eukaryotic/archaeal RNase P protein component 2 family. As to quaternary structure, consists of a catalytic RNA component and at least 4-5 protein subunits.

The protein resides in the cytoplasm. It carries out the reaction Endonucleolytic cleavage of RNA, removing 5'-extranucleotides from tRNA precursor.. Part of ribonuclease P, a protein complex that generates mature tRNA molecules by cleaving their 5'-ends. This Saccharolobus islandicus (strain L.S.2.15 / Lassen #1) (Sulfolobus islandicus) protein is Ribonuclease P protein component 2.